The following is a 151-amino-acid chain: 3-hydroxyacyl-[acyl-carrier-protein] dehydratase FabZ (151 aa).

His54 is a catalytic residue.

The protein belongs to the thioester dehydratase family. FabZ subfamily. Oligomer. Post-translationally, the N-terminus is blocked.

The protein localises to the cytoplasm. The catalysed reaction is a (3R)-hydroxyacyl-[ACP] = a (2E)-enoyl-[ACP] + H2O. Involved in unsaturated fatty acids biosynthesis. Catalyzes the dehydration of short chain beta-hydroxyacyl-ACPs and long chain saturated and unsaturated beta-hydroxyacyl-ACPs. The polypeptide is 3-hydroxyacyl-[acyl-carrier-protein] dehydratase FabZ (Escherichia coli O9:H4 (strain HS)).